The sequence spans 84 residues: Cytochrome b559 subunit alpha (84 aa).

The chain crosses the membrane as a helical span at residues 22–36; the sequence is IIHIPAITILFASGF. His-24 provides a ligand contact to heme.

The protein belongs to the PsbE/PsbF family. Heterodimer of an alpha subunit and a beta subunit. PSII is composed of 1 copy each of membrane proteins PsbA, PsbB, PsbC, PsbD, PsbE, PsbF, PsbH, PsbI, PsbJ, PsbK, PsbL, PsbM, PsbT, PsbX, Psb30/Ycf12, peripheral proteins PsbO, CyanoQ (PsbQ), PsbU, PsbV and a large number of cofactors. It forms dimeric complexes. Heme b serves as cofactor.

Its subcellular location is the cell inner membrane. In terms of biological role, this b-type cytochrome is tightly associated with the reaction center of photosystem II (PSII). PSII is a light-driven water:plastoquinone oxidoreductase that uses light energy to abstract electrons from H(2)O, generating O(2) and a proton gradient subsequently used for ATP formation. It consists of a core antenna complex that captures photons, and an electron transfer chain that converts photonic excitation into a charge separation. The protein is Cytochrome b559 subunit alpha of Gloeobacter violaceus (strain ATCC 29082 / PCC 7421).